A 2289-amino-acid chain; its full sequence is DNA polymerase II large subunit (2289 aa).

2 disordered regions span residues 279 to 330 (IGSD…SPRA) and 544 to 563 (SDTN…NTDD). Residues 292–304 (GEADIVKTDKDTN) show a composition bias toward basic and acidic residues. The segment covering 305 to 318 (ESETEDGIDNDDYN) has biased composition (acidic residues). Polar residues predominate over residues 544–557 (SDTNSASGNTSLRA). DOD-type homing endonuclease domains follow at residues 1222 to 1367 (LLGY…RLGI) and 1755 to 1911 (LLGQ…RLGV).

Belongs to the archaeal DNA polymerase II family. As to quaternary structure, heterodimer of a large subunit and a small subunit. In terms of processing, this protein undergoes a protein self splicing that involves a post-translational excision of the intervening region (intein) followed by peptide ligation.

It carries out the reaction DNA(n) + a 2'-deoxyribonucleoside 5'-triphosphate = DNA(n+1) + diphosphate. The catalysed reaction is Exonucleolytic cleavage in the 3'- to 5'-direction to yield nucleoside 5'-phosphates.. In terms of biological role, possesses two activities: a DNA synthesis (polymerase) and an exonucleolytic activity that degrades single-stranded DNA in the 3'- to 5'-direction. Has a template-primer preference which is characteristic of a replicative DNA polymerase. This chain is DNA polymerase II large subunit, found in Haloquadratum walsbyi (strain DSM 16790 / HBSQ001).